The following is a 650-amino-acid chain: Chaperone protein DnaK (650 aa).

Thr-200 is modified (phosphothreonine; by autocatalysis). Residues 613–634 (QAGAAGAAGAAEGAAHAGGAQQ) are disordered.

This sequence belongs to the heat shock protein 70 family.

Acts as a chaperone. This Burkholderia vietnamiensis (strain G4 / LMG 22486) (Burkholderia cepacia (strain R1808)) protein is Chaperone protein DnaK.